Reading from the N-terminus, the 524-residue chain is Cysteine--tRNA ligase (524 aa).

Cysteine 29 contacts Zn(2+). Positions 31–41 match the 'HIGH' region motif; sequence PTVQAAPHVGH. Zn(2+) contacts are provided by cysteine 207, histidine 232, and glutamate 236. Residues 246–258 are compositionally biased toward low complexity; that stretch reads ARPASNAASADSP. The interval 246–273 is disordered; the sequence is ARPASNAASADSPGPGGGEPGGGEPSSG. Positions 259-270 are enriched in gly residues; that stretch reads GPGGGEPGGGEP. Residues 291–295 carry the 'KMSKS' region motif; that stretch reads KMSKS. Lysine 294 is a binding site for ATP.

It belongs to the class-I aminoacyl-tRNA synthetase family. In terms of assembly, monomer. Zn(2+) is required as a cofactor.

It localises to the cytoplasm. It catalyses the reaction tRNA(Cys) + L-cysteine + ATP = L-cysteinyl-tRNA(Cys) + AMP + diphosphate. The chain is Cysteine--tRNA ligase from Frankia casuarinae (strain DSM 45818 / CECT 9043 / HFP020203 / CcI3).